Here is a 294-residue protein sequence, read N- to C-terminus: NAD kinase (294 aa).

Residue D74 is the Proton acceptor of the active site. Residues 74 to 75 (DG), 148 to 149 (NE), H159, R176, D178, 189 to 194 (TAYSLS), and Q249 each bind NAD(+).

It belongs to the NAD kinase family. It depends on a divalent metal cation as a cofactor.

Its subcellular location is the cytoplasm. It carries out the reaction NAD(+) + ATP = ADP + NADP(+) + H(+). Involved in the regulation of the intracellular balance of NAD and NADP, and is a key enzyme in the biosynthesis of NADP. Catalyzes specifically the phosphorylation on 2'-hydroxyl of the adenosine moiety of NAD to yield NADP. In Vibrio vulnificus (strain YJ016), this protein is NAD kinase.